A 119-amino-acid chain; its full sequence is Large ribosomal subunit protein uL18 (119 aa).

It belongs to the universal ribosomal protein uL18 family. In terms of assembly, part of the 50S ribosomal subunit; part of the 5S rRNA/L5/L18/L25 subcomplex. Contacts the 5S and 23S rRNAs.

In terms of biological role, this is one of the proteins that bind and probably mediate the attachment of the 5S RNA into the large ribosomal subunit, where it forms part of the central protuberance. This is Large ribosomal subunit protein uL18 from Clostridium botulinum (strain Loch Maree / Type A3).